Here is a 128-residue protein sequence, read N- to C-terminus: Glycine cleavage system H protein (128 aa).

Residues 25 to 107 form the Lipoyl-binding domain; that stretch reads TFKVGITDHA…YEAGWLFTVR (83 aa). K66 bears the N6-lipoyllysine mark.

This sequence belongs to the GcvH family. As to quaternary structure, the glycine cleavage system is composed of four proteins: P, T, L and H. It depends on (R)-lipoate as a cofactor.

Its function is as follows. The glycine cleavage system catalyzes the degradation of glycine. The H protein shuttles the methylamine group of glycine from the P protein to the T protein. This Kocuria rhizophila (strain ATCC 9341 / DSM 348 / NBRC 103217 / DC2201) protein is Glycine cleavage system H protein.